We begin with the raw amino-acid sequence, 647 residues long: Carotenoid phi-ring synthase (647 aa).

FAD-binding positions include Ala-67, 86–87, Lys-94, and Tyr-120; that span reads EA. The 95-residue stretch at 322 to 416 folds into the Rieske domain; sequence VASIPKREVP…VREAGEMLVI (95 aa). Positions 362, 364, 380, and 383 each coordinate [2Fe-2S] cluster. 2 residues coordinate FAD: Asp-601 and Met-612.

The protein belongs to the carotenoid/retinoid oxidoreductase family. FAD serves as cofactor. Requires [2Fe-2S] cluster as cofactor.

The catalysed reaction is a carotenoid beta-end derivative + 2 A = a carotenoid phi-end derivative + 2 AH2. It functions in the pathway carotenoid biosynthesis. In terms of biological role, involved in the biosynthesis of chlorobactene, a carotenoid with aromatic end group. Catalyzes the introduction of two additional double bonds into the ionone ring of gamma-carotene to produce chlorobactene. The reaction includes an intramolecular methyl transfer from position C1 to position C2 of the ring. This chain is Carotenoid phi-ring synthase, found in Chlorobaculum tepidum (strain ATCC 49652 / DSM 12025 / NBRC 103806 / TLS) (Chlorobium tepidum).